A 351-amino-acid chain; its full sequence is 3-dehydroquinate synthase (351 aa).

Residues 60 to 65 (DGEEYK), 94 to 98 (GVISD), 118 to 119 (TT), Lys-131, Lys-140, and 158 to 161 (FLKT) contribute to the NAD(+) site. Positions 173, 239, and 256 each coordinate Zn(2+).

The protein belongs to the sugar phosphate cyclases superfamily. Dehydroquinate synthase family. The cofactor is NAD(+). Co(2+) serves as cofactor. It depends on Zn(2+) as a cofactor.

It is found in the cytoplasm. It carries out the reaction 7-phospho-2-dehydro-3-deoxy-D-arabino-heptonate = 3-dehydroquinate + phosphate. It participates in metabolic intermediate biosynthesis; chorismate biosynthesis; chorismate from D-erythrose 4-phosphate and phosphoenolpyruvate: step 2/7. Functionally, catalyzes the conversion of 3-deoxy-D-arabino-heptulosonate 7-phosphate (DAHP) to dehydroquinate (DHQ). This chain is 3-dehydroquinate synthase, found in Campylobacter jejuni subsp. jejuni serotype O:2 (strain ATCC 700819 / NCTC 11168).